A 190-amino-acid chain; its full sequence is Vexin (190 aa).

The disordered stretch occupies residues 88-156 (AEKKASRFSR…DEATLPLTAH (69 aa)). A compositionally biased stretch (polar residues) spans 117-133 (TDKQNAPTVPASPSSYE). The span at 136-149 (GCREQRPENPKDEA) shows a compositional bias: basic and acidic residues.

It belongs to the vexin family. As to expression, expressed in differentiating progenitors in the developing central nervous system (CNS).

It localises to the cell membrane. The protein resides in the nucleus. Functionally, required for neurogenesis in the neural plate and retina. Cooperates with cell cycle inhibitor cdknx/p27(xic1) to enhance neurogenesis and increase the levels of the neuronal determination factor neurog2/X-ngngr-1. This is Vexin from Xenopus laevis (African clawed frog).